The sequence spans 1076 residues: Envelopment polyprotein (1076 aa).

An N-terminal signal peptide occupies residues 1–18 (MIVPIVLFLTLCPSELSA). At 19 to 455 (WGSPGDPIVC…NPQCYPVKKW (437 aa)) the chain is on the lumenal side. Intrachain disulfides connect Cys28–Cys51, Cys145–Cys158, Cys182–Cys329, Cys208–Cys218, Cys260–Cys307, Cys289–Cys294, Cys351–Cys354, Cys358–Cys426, and Cys378–Cys383. A helical membrane pass occupies residues 456–476 (LFLVVVIMCCYCALMLLTNIL). Residues 477–523 (RAIGVWGTWVFAPIKLALALGLRLAKLSKKGLVAVVTRGQMIVNDEL) form a golgi retention signal region. Residues 477–539 (RAIGVWGTWV…RGEQNEGRQG (63 aa)) lie on the Cytoplasmic side of the membrane. The tract at residues 544 to 566 (GPIRHWLYSPALILILTTSICSG) is internal signal sequence for glycoprotein C. 10 disulfides stabilise this stretch: Cys567–Cys608, Cys580–Cys590, Cys633–Cys729, Cys648–Cys845, Cys654–Cys702, Cys660–Cys709, Cys664–Cys691, Cys695–Cys700, Cys782–Cys797, and Cys813–Cys827. Over 567 to 1040 (CDELVHAESK…ALFGDGITRW (474 aa)) the chain is Lumenal. Positions 654 to 660 (CRWAGDC) are fusion loop. The tract at residues 695 to 709 (CGGAACGCFNAAPSC) is fusion loop. 2 N-linked (GlcNAc...) asparagine; by host glycosylation sites follow: Asn857 and Asn918. 2 disulfide bridges follow: Cys912-Cys982 and Cys922-Cys925. The N-linked (GlcNAc...) asparagine; by host glycan is linked to Asn940. A helical membrane pass occupies residues 1041 to 1061 (ILGIIGVLLACVMLFVVVVAI). Over 1062 to 1076 (TRRLIKGLTQRAKVA) the chain is Cytoplasmic.

Belongs to the phlebovirus envelope glycoprotein family. Heterodimer with glycoprotein C. As to quaternary structure, heterodimer with glycoprotein N. Homotrimer (postfusion). Specific enzymatic cleavages in vivo yield mature proteins Glycoprotein C, and Glycoprotein N. In terms of processing, glycosylated. Post-translationally, palmitoylated.

The protein localises to the virion membrane. The protein resides in the host Golgi apparatus membrane. It localises to the host endoplasmic reticulum membrane. Its function is as follows. Structural component of the virion that interacts with glycoprotein C. It shields the hydrophobic fusion loops of the glycoprotein C, preventing premature fusion. The glycoprotein protrusions are arranged on an icosahedral lattice, with T=12 triangulation. They are able to attach the virion to the host cell receptor CD209/DC-SIGN and to promote fusion of membranes with the late endosome after endocytosis of the virion. Plays a role in the packaging of ribonucleoproteins during virus assembly. Structural component of the virion that interacts with glycoprotein N. Acts as a class II fusion protein that is activated upon acidification and subsequent repositioning of the glycoprotein N. The glycoprotein protrusions are arranged on an icosahedral lattice, with T=12 triangulation. They are able to attach the virion to the host cell receptor CD209/DC-SIGN and to promote fusion of membranes with the late endosome after endocytosis of the virion. This chain is Envelopment polyprotein (GP), found in Alces americanus (American moose).